Here is a 295-residue protein sequence, read N- to C-terminus: CBY1-interacting BAR domain-containing protein 1 (295 aa).

Residues 1–49 (MMSRTPDARARDTQTKQIQENITSVEKHFGDLCQLFAAYVRKTARLRDK) constitute a mitochondrion transit peptide. Residues 12 to 222 (DTQTKQIQEN…NVDEEGDLEV (211 aa)) form a BAR-like region. Positions 111 to 185 (KREDLKQTQS…KQKIRDIKKV (75 aa)) form a coiled coil. Positions 243–265 (SKLSLNRTGTSMSKSGTMQSRTS) are enriched in polar residues. The segment at 243–295 (SKLSLNRTGTSMSKSGTMQSRTSSRQRKRDDEEDEEEDDEDEDDLEEVTDDEH) is disordered. Over residues 273 to 295 (DEEDEEEDDEDEDDLEEVTDDEH) the composition is skewed to acidic residues.

The protein belongs to the CIBAR family.

Its subcellular location is the cytoplasm. The protein localises to the cytoskeleton. It localises to the microtubule organizing center. The protein resides in the centrosome. It is found in the centriole. Its subcellular location is the cell projection. The protein localises to the cilium. It localises to the nucleus. The protein resides in the mitochondrion inner membrane. It is found in the flagellum. In terms of biological role, plays a critical role in regulating mitochondrial ultrastructure and function by maintaining the integrity of mitochondrial morphology, particularly the organization of cristae. Plays a crucial role in ciliogenesis. Plays a key role in the correct positioning of the annulus, a septin-based ring structure in the sperm flagellum, serving both as a physical barrier and a membrane diffusion barrier that separates the midpiece (MP) from the principal piece (PP). The polypeptide is CBY1-interacting BAR domain-containing protein 1 (cibar1) (Danio rerio (Zebrafish)).